The following is a 404-amino-acid chain: Bifunctional enzyme IspD/IspF (404 aa).

The interval 1–243 is 2-C-methyl-D-erythritol 4-phosphate cytidylyltransferase; that stretch reads MQAEEQFSCG…KLTRMAIPDV (243 aa). The 2-C-methyl-D-erythritol 2,4-cyclodiphosphate synthase stretch occupies residues 244–404; sequence RTGNGYDVHQ…TVVYASGGDA (161 aa). Residues Asp-250 and His-252 each coordinate a divalent metal cation. 4-CDP-2-C-methyl-D-erythritol 2-phosphate is bound by residues 250–252 and 276–277; these read DVH and HS. His-284 provides a ligand contact to a divalent metal cation. 4-CDP-2-C-methyl-D-erythritol 2-phosphate-binding positions include 298–300, 374–377, Phe-381, and Arg-384; these read DIG and TTNE.

In the N-terminal section; belongs to the IspD/TarI cytidylyltransferase family. IspD subfamily. This sequence in the C-terminal section; belongs to the IspF family. A divalent metal cation serves as cofactor.

It catalyses the reaction 2-C-methyl-D-erythritol 4-phosphate + CTP + H(+) = 4-CDP-2-C-methyl-D-erythritol + diphosphate. The enzyme catalyses 4-CDP-2-C-methyl-D-erythritol 2-phosphate = 2-C-methyl-D-erythritol 2,4-cyclic diphosphate + CMP. It functions in the pathway isoprenoid biosynthesis; isopentenyl diphosphate biosynthesis via DXP pathway; isopentenyl diphosphate from 1-deoxy-D-xylulose 5-phosphate: step 2/6. Its pathway is isoprenoid biosynthesis; isopentenyl diphosphate biosynthesis via DXP pathway; isopentenyl diphosphate from 1-deoxy-D-xylulose 5-phosphate: step 4/6. Functionally, bifunctional enzyme that catalyzes the formation of 4-diphosphocytidyl-2-C-methyl-D-erythritol from CTP and 2-C-methyl-D-erythritol 4-phosphate (MEP) (IspD), and catalyzes the conversion of 4-diphosphocytidyl-2-C-methyl-D-erythritol 2-phosphate (CDP-ME2P) to 2-C-methyl-D-erythritol 2,4-cyclodiphosphate (ME-CPP) with a corresponding release of cytidine 5-monophosphate (CMP) (IspF). The protein is Bifunctional enzyme IspD/IspF of Sinorhizobium medicae (strain WSM419) (Ensifer medicae).